Reading from the N-terminus, the 97-residue chain is Large ribosomal subunit protein bL28 (97 aa).

This sequence belongs to the bacterial ribosomal protein bL28 family.

The sequence is that of Large ribosomal subunit protein bL28 from Sphingopyxis alaskensis (strain DSM 13593 / LMG 18877 / RB2256) (Sphingomonas alaskensis).